We begin with the raw amino-acid sequence, 245 residues long: Ribosomal RNA small subunit methyltransferase G (245 aa).

Residues Gly-85, Phe-90, 108–110 (DST), 136–137 (AE), and Arg-155 contribute to the S-adenosyl-L-methionine site.

This sequence belongs to the methyltransferase superfamily. RNA methyltransferase RsmG family.

It is found in the cytoplasm. Its function is as follows. Specifically methylates the N7 position of a guanine in 16S rRNA. In Trichormus variabilis (strain ATCC 29413 / PCC 7937) (Anabaena variabilis), this protein is Ribosomal RNA small subunit methyltransferase G.